Consider the following 424-residue polypeptide: Serine hydroxymethyltransferase (424 aa).

(6S)-5,6,7,8-tetrahydrofolate is bound by residues leucine 123 and 127-129 (GHL). An N6-(pyridoxal phosphate)lysine modification is found at lysine 232. Residue glutamate 245 coordinates (6S)-5,6,7,8-tetrahydrofolate.

Belongs to the SHMT family. As to quaternary structure, homodimer. Pyridoxal 5'-phosphate serves as cofactor.

The protein localises to the cytoplasm. The enzyme catalyses (6R)-5,10-methylene-5,6,7,8-tetrahydrofolate + glycine + H2O = (6S)-5,6,7,8-tetrahydrofolate + L-serine. Its pathway is one-carbon metabolism; tetrahydrofolate interconversion. It functions in the pathway amino-acid biosynthesis; glycine biosynthesis; glycine from L-serine: step 1/1. Its function is as follows. Catalyzes the reversible interconversion of serine and glycine with tetrahydrofolate (THF) serving as the one-carbon carrier. This reaction serves as the major source of one-carbon groups required for the biosynthesis of purines, thymidylate, methionine, and other important biomolecules. Also exhibits THF-independent aldolase activity toward beta-hydroxyamino acids, producing glycine and aldehydes, via a retro-aldol mechanism. The chain is Serine hydroxymethyltransferase from Kocuria rhizophila (strain ATCC 9341 / DSM 348 / NBRC 103217 / DC2201).